We begin with the raw amino-acid sequence, 441 residues long: POC1 centriolar protein homolog A (441 aa).

7 WD repeats span residues 16–55 (GHRD…RAYR), 58–97 (GHKD…ESTV), 100–139 (AHTG…FLFS), 142–181 (QHIN…CIHS), 184–223 (EHGG…LIQH), 226–265 (VHSG…LLYT), and 268–307 (GHQG…ASYA). The tract at residues 323–380 (DYTSGVPAADRHRPERNAQTDQADDLEPRHIQMSAKDRSSPLSYTSRSIDQHHPQAED) is disordered. 3 stretches are compositionally biased toward basic and acidic residues: residues 331 to 340 (ADRHRPERNA), 348 to 361 (LEPR…KDRS), and 371 to 380 (IDQHHPQAED). A coiled-coil region spans residues 400–427 (LTRTVGILEQRLSLTEDKLKECIDNQQA).

It belongs to the WD repeat POC1 family. In terms of assembly, interacts with pat.

Its subcellular location is the cytoplasm. The protein localises to the cytoskeleton. May play an important role in centriole assembly and/or stability and ciliogenesis. This chain is POC1 centriolar protein homolog A (poc1a), found in Xenopus tropicalis (Western clawed frog).